Reading from the N-terminus, the 275-residue chain is Anthracycline biosynthesis protein DauV (275 aa).

VOC domains lie at 8-136 and 150-263; these read APAW…VWRK and SVGW…VVEL.

Its pathway is antibiotic biosynthesis; daunorubicin biosynthesis. It participates in antibiotic biosynthesis; carminomycin biosynthesis. Its function is as follows. Involved in the biosynthesis of the anthracyclines carminomycin and daunorubicin (daunomycin) which are aromatic polyketide antibiotics that exhibit high cytotoxicity and are widely applied in the chemotherapy of a variety of cancers. Acts jointly with DoxA in the conversion of 13-deoxycarminomycin and 13-deoxydaunorubicin to yield carminomycin and daunorubicin, respectively. In Streptomyces sp. (strain C5), this protein is Anthracycline biosynthesis protein DauV (dauV).